Consider the following 461-residue polypeptide: Protein transport protein HofB homolog (461 aa).

222 to 229 (GPTGSGKT) provides a ligand contact to ATP.

This sequence belongs to the GSP E family.

This Escherichia coli (strain K12) protein is Protein transport protein HofB homolog (hofB).